A 1222-amino-acid chain; its full sequence is ATP-dependent helicase/nuclease subunit A (1222 aa).

A UvrD-like helicase ATP-binding domain is found at 39-495 (QKRTAQQIEA…ILLKENFRSQ (457 aa)). 60–67 (ASAGSGKT) is an ATP binding site. Residues 524-810 (QLIAGSHAQT…NLMTIHKSKG (287 aa)) form the UvrD-like helicase C-terminal domain.

It belongs to the helicase family. AddA subfamily. Heterodimer of AddA and AddB/RexB. The cofactor is Mg(2+).

The catalysed reaction is Couples ATP hydrolysis with the unwinding of duplex DNA by translocating in the 3'-5' direction.. It catalyses the reaction ATP + H2O = ADP + phosphate + H(+). In terms of biological role, the heterodimer acts as both an ATP-dependent DNA helicase and an ATP-dependent, dual-direction single-stranded exonuclease. Recognizes the chi site generating a DNA molecule suitable for the initiation of homologous recombination. The AddA nuclease domain is required for chi fragment generation; this subunit has the helicase and 3' -&gt; 5' nuclease activities. This chain is ATP-dependent helicase/nuclease subunit A, found in Streptococcus pyogenes serotype M12 (strain MGAS2096).